Here is a 386-residue protein sequence, read N- to C-terminus: Acyl-[acyl-carrier-protein] dehydrogenase MbtN (386 aa).

Belongs to the acyl-CoA dehydrogenase family. The cofactor is FAD.

It participates in siderophore biosynthesis; mycobactin biosynthesis. In terms of biological role, catalyzes the dehydrogenation at the alpha-beta position of ACP-bound acyl chains. This results in the introduction of a double bond in the lipidic chain, which is further transferred to the epsilon-amino group of lysine residue in the mycobactin core by MbtK. This is Acyl-[acyl-carrier-protein] dehydrogenase MbtN (mbtN) from Mycobacterium bovis (strain ATCC BAA-935 / AF2122/97).